The chain runs to 159 residues: Protein Smg homolog (159 aa).

This sequence belongs to the Smg family.

This is Protein Smg homolog from Vibrio campbellii (strain ATCC BAA-1116).